The sequence spans 337 residues: DNA-directed RNA polymerase subunit alpha (337 aa).

The segment at 1 to 233 (MIQKNWQELI…DQLSIFVNFE (233 aa)) is alpha N-terminal domain (alpha-NTD). Residues 249-337 (FNPALLKKVD…DLAKRYEDQY (89 aa)) form an alpha C-terminal domain (alpha-CTD) region.

This sequence belongs to the RNA polymerase alpha chain family. Homodimer. The RNAP catalytic core consists of 2 alpha, 1 beta, 1 beta' and 1 omega subunit. When a sigma factor is associated with the core the holoenzyme is formed, which can initiate transcription.

The catalysed reaction is RNA(n) + a ribonucleoside 5'-triphosphate = RNA(n+1) + diphosphate. Its function is as follows. DNA-dependent RNA polymerase catalyzes the transcription of DNA into RNA using the four ribonucleoside triphosphates as substrates. In Brucella ovis (strain ATCC 25840 / 63/290 / NCTC 10512), this protein is DNA-directed RNA polymerase subunit alpha.